The following is a 188-amino-acid chain: UPF0340 protein SSU98_0310 (188 aa).

This sequence belongs to the UPF0340 family.

This is UPF0340 protein SSU98_0310 from Streptococcus suis (strain 98HAH33).